Reading from the N-terminus, the 362-residue chain is Solute carrier family 25 member 3 (362 aa).

The N-terminal 49 residues, 1-49 (MFSSVAHLARANPFNTPHLQLVHDGLGDLRSSSPGPTGQPRRPRNLAAA), are a transit peptide targeting the mitochondrion. Over 50 to 63 (AVEEQYSCDYGSGR) the chain is Mitochondrial intermembrane. Solcar repeat units follow at residues 63 to 147 (RFFI…FKVL), 160 to 244 (WRTS…TVEA), and 261 to 339 (EQLV…VKVY). A helical transmembrane segment spans residues 64 to 86 (FFILCGLGGIISCGTTHTALVPL). Topologically, residues 87-121 (DLVKCRMQVDPQKYKGIFNGFSVTLKEDGVRGLAK) are mitochondrial matrix. K99 is subject to N6-acetyllysine. K112 carries the post-translational modification N6-methyllysine. Residues 122–141 (GWAPTFLGYSMQGLCKFGFY) form a helical membrane-spanning segment. At 142–161 (EVFKVLYSNMLGEENTYLWR) the chain is on the mitochondrial intermembrane side. Residues 162 to 183 (TSLYLAASASAEFFADIALAPM) traverse the membrane as a helical segment. The Mitochondrial matrix portion of the chain corresponds to 184–218 (EAAKVRIQTQPGYANTLRDAAPKMYKEEGLKAFYK). Y196 carries the phosphotyrosine modification. Position 209 is an N6-acetyllysine (K209). A helical membrane pass occupies residues 219–238 (GVAPLWMRQIPYTMMKFACF). Residues 239–261 (ERTVEALYKFVVPKPRSECSKPE) are Mitochondrial intermembrane-facing. Residues 262-284 (QLVVTFVAGYIAGVFCAIVSHPA) form a helical membrane-spanning segment. At 285–314 (DSVVSVLNKEKGSSASLVLKRLGFKGVWKG) the chain is on the mitochondrial matrix side. The helical transmembrane segment at 315 to 333 (LFARIIMIGTLTALQWFIY) threads the bilayer. The Mitochondrial intermembrane segment spans residues 334 to 362 (DSVKVYFRLPRPPPPEMPESLKKKLGLTQ).

It belongs to the mitochondrial carrier (TC 2.A.29) family. In terms of assembly, interacts with PPIF; the interaction is impaired by CsA.

Its subcellular location is the mitochondrion inner membrane. The catalysed reaction is phosphate(in) + H(+)(in) = phosphate(out) + H(+)(out). Its function is as follows. Inorganic ion transporter that transports phosphate or copper ions across the mitochondrial inner membrane into the matrix compartment. Mediates proton-coupled symport of phosphate ions necessary for mitochondrial oxidative phosphorylation of ADP to ATP. Transports copper ions probably in the form of anionic copper(I) complexes to maintain mitochondrial matrix copper pool and to supply copper for cytochrome C oxidase complex assembly. May also play a role in regulation of the mitochondrial permeability transition pore (mPTP). This is Solute carrier family 25 member 3 from Homo sapiens (Human).